Reading from the N-terminus, the 244-residue chain is Uridylate kinase (244 aa).

18–21 (KVSG) serves as a coordination point for ATP. Residue Gly-60 participates in UMP binding. The ATP site is built by Gly-61 and Arg-65. Residues Asp-80 and 141–148 (TGNPFCTT) contribute to the UMP site. Residues Thr-168, Gln-169, Tyr-174, and Asp-177 each contribute to the ATP site.

Belongs to the UMP kinase family. Homohexamer.

The protein resides in the cytoplasm. The enzyme catalyses UMP + ATP = UDP + ADP. It functions in the pathway pyrimidine metabolism; CTP biosynthesis via de novo pathway; UDP from UMP (UMPK route): step 1/1. With respect to regulation, inhibited by UTP. Its function is as follows. Catalyzes the reversible phosphorylation of UMP to UDP. The sequence is that of Uridylate kinase from Rickettsia typhi (strain ATCC VR-144 / Wilmington).